The following is a 464-amino-acid chain: tRNA modification GTPase MnmE (464 aa).

Arg-27, Glu-90, and Lys-129 together coordinate (6S)-5-formyl-5,6,7,8-tetrahydrofolate. One can recognise a TrmE-type G domain in the interval 222–384 (GVTLVLAGSV…LYDRIRSFIA (163 aa)). GTP is bound by residues 232–237 (NVGKSS), 251–257 (SSYAGTT), and 276–279 (DTAG). Residue Ser-236 participates in Mg(2+) binding. A K(+)-binding site is contributed by Ser-251. Thr-257 provides a ligand contact to Mg(2+). A (6S)-5-formyl-5,6,7,8-tetrahydrofolate-binding site is contributed by Lys-464.

This sequence belongs to the TRAFAC class TrmE-Era-EngA-EngB-Septin-like GTPase superfamily. TrmE GTPase family. Homodimer. Heterotetramer of two MnmE and two MnmG subunits. K(+) serves as cofactor.

It localises to the cytoplasm. Functionally, exhibits a very high intrinsic GTPase hydrolysis rate. Involved in the addition of a carboxymethylaminomethyl (cmnm) group at the wobble position (U34) of certain tRNAs, forming tRNA-cmnm(5)s(2)U34. The protein is tRNA modification GTPase MnmE of Borrelia recurrentis (strain A1).